The chain runs to 361 residues: Phospho-N-acetylmuramoyl-pentapeptide-transferase (361 aa).

Transmembrane regions (helical) follow at residues 27-47 (ILAS…MIRW), 70-90 (GTPT…CLLW), 97-117 (SLWL…VDDY), 134-154 (YFWQ…NASL), 167-187 (TVTW…IVGS), 199-219 (GLAI…AYAS), 236-256 (TGEL…FLWY), 263-283 (VFMG…VAIV), 288-308 (LVLL…ILQV), and 338-358 (KVIV…LATL).

The protein belongs to the glycosyltransferase 4 family. MraY subfamily. Mg(2+) is required as a cofactor.

It is found in the cell inner membrane. The enzyme catalyses UDP-N-acetyl-alpha-D-muramoyl-L-alanyl-gamma-D-glutamyl-meso-2,6-diaminopimeloyl-D-alanyl-D-alanine + di-trans,octa-cis-undecaprenyl phosphate = di-trans,octa-cis-undecaprenyl diphospho-N-acetyl-alpha-D-muramoyl-L-alanyl-D-glutamyl-meso-2,6-diaminopimeloyl-D-alanyl-D-alanine + UMP. The protein operates within cell wall biogenesis; peptidoglycan biosynthesis. Catalyzes the initial step of the lipid cycle reactions in the biosynthesis of the cell wall peptidoglycan: transfers peptidoglycan precursor phospho-MurNAc-pentapeptide from UDP-MurNAc-pentapeptide onto the lipid carrier undecaprenyl phosphate, yielding undecaprenyl-pyrophosphoryl-MurNAc-pentapeptide, known as lipid I. The chain is Phospho-N-acetylmuramoyl-pentapeptide-transferase from Legionella pneumophila (strain Paris).